A 221-amino-acid chain; its full sequence is MVAFTSLLAGFAAIAGVLSAPTESSVEVEKRQTIGPGTGYSNGYYYSYWNDGHAGVTYTNGGGGSFTVNWSNSGNFVGGKGWQPGTKNKVINFSGSYNPNGNSYLSIYGWSRNPLIEYYIVENFGTYNPSTGATKLGEVTSDGSVYDIYRTQRVNQPSIIGTATFYQYWSVRRNHRSSGSVNTANHFNAWASHGLTLGTMDYQIVAVEGYFSSGSASITVS.

The first 19 residues, 1–19 (MVAFTSLLAGFAAIAGVLS), serve as a signal peptide directing secretion. Residues 32-221 (QTIGPGTGYS…SSGSASITVS (190 aa)) enclose the GH11 domain. Asn-69 and Asn-92 each carry an N-linked (GlcNAc...) asparagine glycan. Glu-117 serves as the catalytic Nucleophile. The active-site Proton donor is the Glu-208.

Belongs to the glycosyl hydrolase 11 (cellulase G) family.

The protein localises to the secreted. The enzyme catalyses Endohydrolysis of (1-&gt;4)-beta-D-xylosidic linkages in xylans.. It functions in the pathway glycan degradation; xylan degradation. Endo-1,4-beta-xylanase involved in the hydrolysis of xylan, a major structural heterogeneous polysaccharide found in plant biomass representing the second most abundant polysaccharide in the biosphere, after cellulose. This chain is Endo-1,4-beta-xylanase 2 (Xyn2), found in Trichoderma harzianum (Hypocrea lixii).